Here is a 236-residue protein sequence, read N- to C-terminus: NADH-quinone oxidoreductase subunit C (236 aa).

The segment at 1-20 (MSPPNQDAQEGRPDSPTAEV) is disordered.

The protein belongs to the complex I 30 kDa subunit family. In terms of assembly, NDH-1 is composed of 14 different subunits. Subunits NuoB, C, D, E, F, and G constitute the peripheral sector of the complex.

The protein resides in the cell membrane. The enzyme catalyses a quinone + NADH + 5 H(+)(in) = a quinol + NAD(+) + 4 H(+)(out). Functionally, NDH-1 shuttles electrons from NADH, via FMN and iron-sulfur (Fe-S) centers, to quinones in the respiratory chain. The immediate electron acceptor for the enzyme in this species is believed to be a menaquinone. Couples the redox reaction to proton translocation (for every two electrons transferred, four hydrogen ions are translocated across the cytoplasmic membrane), and thus conserves the redox energy in a proton gradient. This Mycobacterium tuberculosis (strain ATCC 25177 / H37Ra) protein is NADH-quinone oxidoreductase subunit C.